The sequence spans 451 residues: Tubulin alpha chain (451 aa).

Glutamine 11 provides a ligand contact to GTP. The residue at position 40 (lysine 40) is an N6-acetyllysine. Residues glutamate 71, glycine 144, threonine 145, threonine 179, asparagine 206, and asparagine 228 each contribute to the GTP site. Position 71 (glutamate 71) interacts with Mg(2+). Residue glutamate 254 is part of the active site.

The protein belongs to the tubulin family. In terms of assembly, dimer of alpha and beta chains. A typical microtubule is a hollow water-filled tube with an outer diameter of 25 nm and an inner diameter of 15 nM. Alpha-beta heterodimers associate head-to-tail to form protofilaments running lengthwise along the microtubule wall with the beta-tubulin subunit facing the microtubule plus end conferring a structural polarity. Microtubules usually have 13 protofilaments but different protofilament numbers can be found in some organisms and specialized cells. The cofactor is Mg(2+). Post-translationally, undergoes a tyrosination/detyrosination cycle, the cyclic removal and re-addition of a C-terminal tyrosine residue by the enzymes tubulin tyrosine carboxypeptidase (TTCP) and tubulin tyrosine ligase (TTL), respectively. Acetylation of alpha chains at Lys-40 stabilizes microtubules and affects affinity and processivity of microtubule motors. This modification has a role in multiple cellular functions, ranging from cell motility, cell cycle progression or cell differentiation to intracellular trafficking and signaling.

The protein resides in the cytoplasm. It is found in the cytoskeleton. It carries out the reaction GTP + H2O = GDP + phosphate + H(+). Its function is as follows. Tubulin is the major constituent of microtubules, a cylinder consisting of laterally associated linear protofilaments composed of alpha- and beta-tubulin heterodimers. Microtubules grow by the addition of GTP-tubulin dimers to the microtubule end, where a stabilizing cap forms. Below the cap, tubulin dimers are in GDP-bound state, owing to GTPase activity of alpha-tubulin. The chain is Tubulin alpha chain from Trypanosoma cruzi.